A 404-amino-acid polypeptide reads, in one-letter code: Clavilactone A biosynthesis cluster protein Y (404 aa).

In terms of biological role, part of the gene cluster that mediates the biosynthesis of clavilactone A, a meroterpenoid that features a unique benzo-fused ten-membered carbocyclic ring unit with an alpha,beta-epoxy-gamma-lactone moiety, forming an intriguing 10/5/3 tricyclic nested skeleton. ClaR, ClaS and ClaT are sufficient to produce clavilactone A and the function of claY, if any, has still to be identified. The biosynthesis begins with the prenyltransferase claS that transfers geranyl pyrophosphate (GPP) to hydroquinone to produces geranylhydroquinon. The cytochrome P450 monooxygenase claR then catalyzes the diradical coupling reaction between the intramolecular hydroquinone and allyl moieties to form the benzo-fused ten-membered carbocyclic ring unit of wigantol. Finally the cytochrome P450 monooxygenase claT exquisitely and stereoselectively assembles the alpha,beta-epoxy-gamma-lactone moiety, producing clavilactone A via arnebinol A. The sequence is that of Clavilactone A biosynthesis cluster protein Y from Ampulloclitocybe clavipes (Club foot).